The primary structure comprises 277 residues: NH(3)-dependent NAD(+) synthetase (277 aa).

Gly-46–Ser-53 serves as a coordination point for ATP. Residue Asp-52 coordinates Mg(2+). Arg-142 contributes to the deamido-NAD(+) binding site. Thr-162 contributes to the ATP binding site. Residue Glu-167 coordinates Mg(2+). Deamido-NAD(+)-binding residues include Lys-175 and Asp-182. ATP is bound by residues Lys-191 and Thr-213. Residue His-263–Lys-264 participates in deamido-NAD(+) binding.

It belongs to the NAD synthetase family. In terms of assembly, homodimer.

It carries out the reaction deamido-NAD(+) + NH4(+) + ATP = AMP + diphosphate + NAD(+) + H(+). It participates in cofactor biosynthesis; NAD(+) biosynthesis; NAD(+) from deamido-NAD(+) (ammonia route): step 1/1. In terms of biological role, catalyzes the ATP-dependent amidation of deamido-NAD to form NAD. Uses ammonia as a nitrogen source. In Corynebacterium glutamicum (strain R), this protein is NH(3)-dependent NAD(+) synthetase.